Reading from the N-terminus, the 902-residue chain is Histone-lysine N-methyltransferase CLF (902 aa).

The segment covering 1–14 (MASEASPSSSATRS) has biased composition (low complexity). Disordered stretches follow at residues 1 to 33 (MASEASPSSSATRSEPPKDSPAEERGPASKEVS), 73 to 107 (SMERGGSCKDGSDLLVKRQRDSPGMKSGIDESNNN), and 335 to 522 (GKTG…FMGE). Basic and acidic residues-rich tracts occupy residues 15 to 33 (EPPKDSPAEERGPASKEVS) and 78 to 95 (GSCKDGSDLLVKRQRDSP). Residues 337–357 (TGTSSDGAGTKTTPTKFSSKL) show a composition bias toward polar residues. The segment covering 394–403 (DKVSSSPKVK) has biased composition (low complexity). Residues 404–416 (GSGRRVGRKRNKN) are compositionally biased toward basic residues. A compositionally biased stretch (low complexity) spans 438–449 (SDSIASGSCSPS). Residues 459–473 (ATSSSQKHVKSGNSG) show a composition bias toward polar residues. Residues 531-581 (TNKLWRPLEKSLFDKGVEIFGMNSCLIARNLLSGFKSCWEVFQYMTCSENK) form the SANT domain. The region spanning 638–737 (RKRITEKKDQ…SLGVPSQRGD (100 aa)) is the CXC domain. One can recognise an SET domain in the interval 752–867 (QRVLLGISDV…AGEELFYDYR (116 aa)). S-adenosyl-L-methionine is bound at residue tyrosine 866. The segment covering 875–890 (AWAKKPEAPGSKKDEN) has biased composition (basic and acidic residues). The disordered stretch occupies residues 875-902 (AWAKKPEAPGSKKDENVTPSVGRPKKLA).

It belongs to the class V-like SAM-binding methyltransferase superfamily. Histone-lysine methyltransferase family. EZ subfamily. As to quaternary structure, probable component of a PcG complex. In plants, PcG complexes are probably composed of a member of the EZ family (CLF or MEA), FIE, and a member of the VEFS family (FIS2, VRN2 or EMF2). Interacts with FIE. Interacts with RING1A. Binds to ALP1. Interacts with BLI. Binds to ATX1 in the nucleus. Interacts with EOL1. Interacts (via SANT domain) with HXK1 in the nucleus. Strongly expressed throughout the apical meristem, leaf primordia, and leaves of 7-8 day-old seedling. Weakly expressed in the vasculature of hypocotyl. Strongly expressed throughout the young stages 1 and 2 floral meristems that arose on the flanks of the apex. In stage 3 and 4 flowers, it is expressed in the emerging sepal primordia and in the dome of the floral meristem. During stages 6 and 7, it is strongly expressed in developing petal and stamen, and weakly expressed in the sepals. Late in floral development, at stage 12, it is weakly expressed in all floral whorls, and expressed at intermediate level in petals and ovules.

It is found in the nucleus. The catalysed reaction is L-lysyl-[histone] + S-adenosyl-L-methionine = N(6)-methyl-L-lysyl-[histone] + S-adenosyl-L-homocysteine + H(+). Polycomb group (PcG) protein. Catalytic subunit of some PcG multiprotein complex, which methylates 'Lys-27' of histone H3, leading to transcriptional repression of the affected target genes, mainly abscisic acid (ABA) responsive elements. Required to regulate floral development by repressing the AGAMOUS homeotic gene in leaves, inflorescence stems and flowers. Together with ATX1, modulates AG nucleosome methylation statement. Regulates the antero-posterior organization of the endosperm, as well as the division and elongation rates of leaf cells. PcG proteins act by forming multiprotein complexes, which are required to maintain the transcriptionally repressive state of homeotic genes throughout development. PcG proteins are not required to initiate repression, but to maintain it during later stages of development. Forms a nuclear complex with EZA1/SWN and HXK1 to target common glucose-responsive genes and regulate glucose signaling by glucose-mediated gene repression. Affects the recruitment of HXK1 to the target chromatin. The protein is Histone-lysine N-methyltransferase CLF of Arabidopsis thaliana (Mouse-ear cress).